The primary structure comprises 131 residues: L-ectoine synthase (131 aa).

Belongs to the ectoine synthase family.

The enzyme catalyses (2S)-4-acetamido-2-aminobutanoate = L-ectoine + H2O. The protein operates within amine and polyamine biosynthesis; ectoine biosynthesis; L-ectoine from L-aspartate 4-semialdehyde: step 3/3. Catalyzes the circularization of gamma-N-acetyl-alpha,gamma-diaminobutyric acid (ADABA) to ectoine (1,4,5,6-tetrahydro-2-methyl-4-pyrimidine carboxylic acid), which is an excellent osmoprotectant. This Wolinella succinogenes (strain ATCC 29543 / DSM 1740 / CCUG 13145 / JCM 31913 / LMG 7466 / NCTC 11488 / FDC 602W) (Vibrio succinogenes) protein is L-ectoine synthase.